We begin with the raw amino-acid sequence, 21 residues long: uncharacterized protein (21 aa).

This is an uncharacterized protein from Escherichia coli (strain K12).